Consider the following 341-residue polypeptide: Eukaryotic translation initiation factor 3 subunit I (341 aa).

5 WD repeats span residues 8–49 (GHER…GTYR), 50–91 (GHQG…KTWD), 135–184 (QSDE…LLYN), 189–228 (ELNQ…VLKS), and 286–325 (GHFG…YDFL).

The protein belongs to the eIF-3 subunit I family. Component of the eukaryotic translation initiation factor 3 (eIF-3) complex.

It localises to the cytoplasm. Component of the eukaryotic translation initiation factor 3 (eIF-3) complex, which is involved in protein synthesis of a specialized repertoire of mRNAs and, together with other initiation factors, stimulates binding of mRNA and methionyl-tRNAi to the 40S ribosome. The eIF-3 complex specifically targets and initiates translation of a subset of mRNAs involved in cell proliferation. The chain is Eukaryotic translation initiation factor 3 subunit I from Chaetomium globosum (strain ATCC 6205 / CBS 148.51 / DSM 1962 / NBRC 6347 / NRRL 1970) (Soil fungus).